Consider the following 573-residue polypeptide: Urease subunit alpha 2 (573 aa).

The 439-residue stretch at 135–573 folds into the Urease domain; the sequence is GGMDTHVHYI…ISLNQLYFFS (439 aa). The Ni(2+) site is built by histidine 140, histidine 142, and lysine 223. Lysine 223 carries the N6-carboxylysine modification. Residue histidine 225 participates in substrate binding. Positions 252 and 278 each coordinate Ni(2+). Catalysis depends on histidine 326, which acts as the Proton donor. Aspartate 366 lines the Ni(2+) pocket.

The protein belongs to the metallo-dependent hydrolases superfamily. Urease alpha subunit family. As to quaternary structure, heterotrimer of UreA (gamma), UreB (beta) and UreC (alpha) subunits. Three heterotrimers associate to form the active enzyme. Ni cation serves as cofactor. Carboxylation allows a single lysine to coordinate two nickel ions.

The protein localises to the cytoplasm. The enzyme catalyses urea + 2 H2O + H(+) = hydrogencarbonate + 2 NH4(+). It functions in the pathway nitrogen metabolism; urea degradation; CO(2) and NH(3) from urea (urease route): step 1/1. Disrupting the ure2 operon has no effect on urease activity, or pathogen survival in BALB/c mice when inoculated by gavage, but confers slightly enhanced resistance to low pH killing in vitro. The sequence is that of Urease subunit alpha 2 from Brucella suis biovar 1 (strain 1330).